The sequence spans 453 residues: Tubulin delta chain (453 aa).

143 to 149 (AGGTGSG) contributes to the GTP binding site.

The protein belongs to the tubulin family. As to quaternary structure, found in a complex with TEDC1, TEDC2, TUBE1 and TUBD1.

It is found in the nucleus. The protein localises to the cytoplasm. It localises to the cytoskeleton. Its subcellular location is the microtubule organizing center. The protein resides in the centrosome. It is found in the centriole. The protein localises to the cell projection. It localises to the cilium. Acts as a positive regulator of hedgehog signaling and regulates ciliary function. In Canis lupus familiaris (Dog), this protein is Tubulin delta chain (TUBD1).